The following is a 355-amino-acid chain: Phosphoribosylformylglycinamidine cyclo-ligase (355 aa).

Belongs to the AIR synthase family.

Its subcellular location is the cytoplasm. It carries out the reaction 2-formamido-N(1)-(5-O-phospho-beta-D-ribosyl)acetamidine + ATP = 5-amino-1-(5-phospho-beta-D-ribosyl)imidazole + ADP + phosphate + H(+). Its pathway is purine metabolism; IMP biosynthesis via de novo pathway; 5-amino-1-(5-phospho-D-ribosyl)imidazole from N(2)-formyl-N(1)-(5-phospho-D-ribosyl)glycinamide: step 2/2. This is Phosphoribosylformylglycinamidine cyclo-ligase from Methylobacterium nodulans (strain LMG 21967 / CNCM I-2342 / ORS 2060).